Here is a 173-residue protein sequence, read N- to C-terminus: Crossover junction endodeoxyribonuclease RuvC (173 aa).

Residues Asp-8, Glu-67, and Asp-139 contribute to the active site. The Mg(2+) site is built by Asp-8, Glu-67, and Asp-139.

This sequence belongs to the RuvC family. As to quaternary structure, homodimer which binds Holliday junction (HJ) DNA. The HJ becomes 2-fold symmetrical on binding to RuvC with unstacked arms; it has a different conformation from HJ DNA in complex with RuvA. In the full resolvosome a probable DNA-RuvA(4)-RuvB(12)-RuvC(2) complex forms which resolves the HJ. It depends on Mg(2+) as a cofactor.

The protein localises to the cytoplasm. It carries out the reaction Endonucleolytic cleavage at a junction such as a reciprocal single-stranded crossover between two homologous DNA duplexes (Holliday junction).. The RuvA-RuvB-RuvC complex processes Holliday junction (HJ) DNA during genetic recombination and DNA repair. Endonuclease that resolves HJ intermediates. Cleaves cruciform DNA by making single-stranded nicks across the HJ at symmetrical positions within the homologous arms, yielding a 5'-phosphate and a 3'-hydroxyl group; requires a central core of homology in the junction. The consensus cleavage sequence is 5'-(A/T)TT(C/G)-3'. Cleavage occurs on the 3'-side of the TT dinucleotide at the point of strand exchange. HJ branch migration catalyzed by RuvA-RuvB allows RuvC to scan DNA until it finds its consensus sequence, where it cleaves and resolves the cruciform DNA. In Vibrio atlanticus (strain LGP32) (Vibrio splendidus (strain Mel32)), this protein is Crossover junction endodeoxyribonuclease RuvC.